Here is a 397-residue protein sequence, read N- to C-terminus: Elongation factor Tu (397 aa).

The tr-type G domain occupies 10 to 206; sequence KPHVNIGTIG…AVDENIPQPE (197 aa). Residues 19–26 form a G1 region; that stretch reads GHVDHGKT. Residue 19 to 26 coordinates GTP; it reads GHVDHGKT. T26 is a Mg(2+) binding site. The G2 stretch occupies residues 62-66; sequence GITIS. Positions 83–86 are G3; it reads DCPG. Residues 83–87 and 138–141 each bind GTP; these read DCPGH and NKAD. Positions 138 to 141 are G4; sequence NKAD. Positions 176–178 are G5; it reads SAL.

The protein belongs to the TRAFAC class translation factor GTPase superfamily. Classic translation factor GTPase family. EF-Tu/EF-1A subfamily. In terms of assembly, monomer.

It localises to the cytoplasm. The enzyme catalyses GTP + H2O = GDP + phosphate + H(+). Functionally, GTP hydrolase that promotes the GTP-dependent binding of aminoacyl-tRNA to the A-site of ribosomes during protein biosynthesis. This Streptomyces cinnamoneus (Streptoverticillium cinnamoneum) protein is Elongation factor Tu.